The chain runs to 744 residues: Deleted in azoospermia protein 1 (744 aa).

Positions 1 to 10 (MSAANPETPN) are enriched in polar residues. The interval 1 to 27 (MSAANPETPNSTISREASTQSSSAAAS) is disordered. Over residues 11-27 (STISREASTQSSSAAAS) the composition is skewed to low complexity. The 76-residue stretch at 40 to 115 (NTVFVGGIDA…KKLKLGPAIR (76 aa)) folds into the RRM 1 domain. Residues 163–175 (QHVQSAANPETPN) are compositionally biased toward polar residues. Residues 163–192 (QHVQSAANPETPNSTISREASTQSSSAAAS) are disordered. The span at 176–192 (STISREASTQSSSAAAS) shows a compositional bias: low complexity. The 76-residue stretch at 205–280 (NTVFVGGIDA…KKLKLGPAIR (76 aa)) folds into the RRM 2 domain. Polar residues predominate over residues 328–340 (QHVQSAANPETPN). The interval 328–357 (QHVQSAANPETPNSTISREASTQSSSAAAS) is disordered. Low complexity predominate over residues 341–357 (STISREASTQSSSAAAS). In terms of domain architecture, RRM 3 spans 370-445 (NTVFVGGIDA…KKLKLGPAIR (76 aa)). DAZ domains follow at residues 497 to 520 (AYSAYPHSPGQVITGCQLLVYNYQ), 521 to 544 (EYPTYPDSAFQVTTGYQLPVYNYQ), 545 to 568 (PFPAYPRSPFQVTAGYQLPVYNYQ), 569 to 592 (AFPAYPNSPFQVATGYQFPVYNYQ), 593 to 616 (PFPAYPSSPFQVTAGYQLPVYNYQ), 617 to 640 (AFPAYPNSPFQVATGYQFPVYNYQ), 641 to 664 (AFPAYPNSPVQVTTGYQLPVYNYQ), 665 to 688 (AFPAYPSSPFQVTTGYQLPVYNYQ), and 689 to 712 (AFPAYPNSAVQVTTGYQFHVYNYQ).

It belongs to the RRM DAZ family. In terms of assembly, forms a heterodimer with BOLL and DAZL. Interacts with PUM2, DAZAP1, DAZAP2, DZIP1 and DZIP3. As to expression, testis-specific. Expression restricted to premeiotic germ cells, particularly in spermatogonia (at protein level).

It is found in the cytoplasm. Its subcellular location is the nucleus. In terms of biological role, RNA-binding protein that plays an essential role in spermatogenesis. May act by binding to the 3'-UTR of mRNAs and regulating their translation. Promotes germ-cell progression to meiosis and formation of haploid germ cells. This chain is Deleted in azoospermia protein 1 (DAZ1), found in Homo sapiens (Human).